Reading from the N-terminus, the 115-residue chain is Protein E6A (115 aa).

Residues 1–25 form the signal peptide; sequence MTDKFYFYGLFWGILLFVFLQHMQG.

This is Protein E6A (12) from Equine herpesvirus 2 (strain 86/87) (EHV-2).